A 308-amino-acid chain; its full sequence is Uridylate cyclase (308 aa).

Positions 62 and 106 each coordinate Mn(2+).

This sequence belongs to the adenylyl cyclase class-4/guanylyl cyclase family. Pyrimidine cyclase subfamily. Homodimer. Mn(2+) serves as cofactor.

It localises to the cytoplasm. The enzyme catalyses GTP = 3',5'-cyclic GMP + diphosphate. The catalysed reaction is UTP = 3',5'-cyclic UMP + diphosphate. In terms of biological role, pycsar (pyrimidine cyclase system for antiphage resistance) provides immunity against bacteriophage. The pyrimidine cyclase (PycC) synthesizes cyclic nucleotides in response to infection; these serve as specific second messenger signals. The signals activate the adjacent effector, leading to bacterial cell death and abortive phage infection. A clade D Pycsar system. Functionally, the pyrimidine cyclase gene of a two-gene Pycsar system, generates cyclic UMP (cUMP) from UTP as well as cGMP from GTP to a lesser extent, has little to no activity on ATP or CTP. Expression of this and adjacent effector PtPycTM (AC A0A4Q9KQH5) probably confers resistance to bacteriophage. The genes are probably only expressed in response to bacteriophage infection. The protein is Uridylate cyclase of Propioniciclava tarda.